A 612-amino-acid polypeptide reads, in one-letter code: Alpha-1,3-galactosidase B (612 aa).

An N-terminal signal peptide occupies residues 1 to 19 (MKWYLWGAVVLLYSLFGSA). A lipid anchor (N-palmitoyl cysteine) is attached at Cys20. Cys20 carries S-diacylglycerol cysteine lipidation. PbH1 repeat units follow at residues 431-453 (TPTV…LFST), 454-476 (PRQT…LLCG), and 487-536 (CRNV…VIDA).

This sequence belongs to the glycosyl hydrolase 110 family. B subfamily.

It localises to the cell membrane. The catalysed reaction is Hydrolysis of terminal, non-reducing branched (1-&gt;3)-alpha-D-galactosidic residues, producing free D-galactose.. It catalyses the reaction Hydrolysis of terminal, non-reducing linear (1-&gt;3)-alpha-D-galactosidic residues, producing free D-galactose.. The enzyme catalyses Hydrolysis of terminal, non-reducing alpha-D-galactose residues in alpha-D-galactosides, including galactose oligosaccharides, galactomannans and galactolipids.. Functionally, alpha-galactosidase. Removes both branched alpha-1,3-linked galactose residues of blood group B antigens and linear alpha-1,3-linked galactose structures. The polypeptide is Alpha-1,3-galactosidase B (glaB) (Parabacteroides distasonis (strain ATCC 8503 / DSM 20701 / CIP 104284 / JCM 5825 / NCTC 11152)).